The sequence spans 380 residues: 1-deoxy-D-xylulose 5-phosphate reductoisomerase (380 aa).

T10, G11, S12, I13, G36, R37, N38, and N120 together coordinate NADPH. 1-deoxy-D-xylulose 5-phosphate is bound at residue K121. E122 contributes to the NADPH binding site. Mn(2+) is bound at residue D146. S147, E148, S172, and H195 together coordinate 1-deoxy-D-xylulose 5-phosphate. Position 148 (E148) interacts with Mn(2+). G201 serves as a coordination point for NADPH. 4 residues coordinate 1-deoxy-D-xylulose 5-phosphate: S208, N213, K214, and E217. A Mn(2+)-binding site is contributed by E217.

The protein belongs to the DXR family. It depends on Mg(2+) as a cofactor. Requires Mn(2+) as cofactor.

It carries out the reaction 2-C-methyl-D-erythritol 4-phosphate + NADP(+) = 1-deoxy-D-xylulose 5-phosphate + NADPH + H(+). It participates in isoprenoid biosynthesis; isopentenyl diphosphate biosynthesis via DXP pathway; isopentenyl diphosphate from 1-deoxy-D-xylulose 5-phosphate: step 1/6. In terms of biological role, catalyzes the NADPH-dependent rearrangement and reduction of 1-deoxy-D-xylulose-5-phosphate (DXP) to 2-C-methyl-D-erythritol 4-phosphate (MEP). This is 1-deoxy-D-xylulose 5-phosphate reductoisomerase from Listeria innocua serovar 6a (strain ATCC BAA-680 / CLIP 11262).